The following is a 175-amino-acid chain: Ribosome maturation factor RimM (175 aa).

In terms of domain architecture, PRC barrel spans E98–F175.

It belongs to the RimM family. As to quaternary structure, binds ribosomal protein uS19.

It is found in the cytoplasm. Functionally, an accessory protein needed during the final step in the assembly of 30S ribosomal subunit, possibly for assembly of the head region. Essential for efficient processing of 16S rRNA. May be needed both before and after RbfA during the maturation of 16S rRNA. It has affinity for free ribosomal 30S subunits but not for 70S ribosomes. The polypeptide is Ribosome maturation factor RimM (Pseudomonas aeruginosa (strain UCBPP-PA14)).